The primary structure comprises 99 residues: Large ribosomal subunit protein bL21 (99 aa).

The protein belongs to the bacterial ribosomal protein bL21 family. Part of the 50S ribosomal subunit. Contacts protein L20.

Its function is as follows. This protein binds to 23S rRNA in the presence of protein L20. This Mycoplasma mobile (strain ATCC 43663 / 163K / NCTC 11711) (Mesomycoplasma mobile) protein is Large ribosomal subunit protein bL21.